The primary structure comprises 336 residues: Alcohol dehydrogenase (336 aa).

Zn(2+)-binding residues include Cys-37, His-58, Cys-89, Cys-92, Cys-95, Cys-103, and Cys-145.

This sequence belongs to the zinc-containing alcohol dehydrogenase family. The cofactor is Zn(2+).

It catalyses the reaction a primary alcohol + NAD(+) = an aldehyde + NADH + H(+). It carries out the reaction a secondary alcohol + NAD(+) = a ketone + NADH + H(+). This is Alcohol dehydrogenase (adh) from Staphylococcus aureus (strain Mu50 / ATCC 700699).